The primary structure comprises 227 residues: 7-cyano-7-deazaguanine synthase (227 aa).

8 to 18 (FSGGQDSTTCL) contributes to the ATP binding site. Residues C187, C196, C199, and C202 each coordinate Zn(2+).

This sequence belongs to the QueC family. Zn(2+) serves as cofactor.

The enzyme catalyses 7-carboxy-7-deazaguanine + NH4(+) + ATP = 7-cyano-7-deazaguanine + ADP + phosphate + H2O + H(+). Its pathway is purine metabolism; 7-cyano-7-deazaguanine biosynthesis. Functionally, catalyzes the ATP-dependent conversion of 7-carboxy-7-deazaguanine (CDG) to 7-cyano-7-deazaguanine (preQ(0)). The sequence is that of 7-cyano-7-deazaguanine synthase from Aliivibrio fischeri (strain MJ11) (Vibrio fischeri).